Reading from the N-terminus, the 757-residue chain is 5-methyltetrahydropteroyltriglutamate--homocysteine methyltransferase (757 aa).

Residues 16–19 (RELK) and lysine 112 contribute to the 5-methyltetrahydropteroyltri-L-glutamate site. L-homocysteine contacts are provided by residues 432–434 (IGS) and glutamate 485. L-methionine is bound by residues 432-434 (IGS) and glutamate 485. Residues 516–517 (RC) and tryptophan 562 contribute to the 5-methyltetrahydropteroyltri-L-glutamate site. Aspartate 600 contacts L-homocysteine. Residue aspartate 600 coordinates L-methionine. Glutamate 606 is a binding site for 5-methyltetrahydropteroyltri-L-glutamate. Histidine 642, cysteine 644, and glutamate 666 together coordinate Zn(2+). The Proton donor role is filled by histidine 695. Cysteine 727 is a Zn(2+) binding site.

It belongs to the vitamin-B12 independent methionine synthase family. It depends on Zn(2+) as a cofactor.

It carries out the reaction 5-methyltetrahydropteroyltri-L-glutamate + L-homocysteine = tetrahydropteroyltri-L-glutamate + L-methionine. The protein operates within amino-acid biosynthesis; L-methionine biosynthesis via de novo pathway; L-methionine from L-homocysteine (MetE route): step 1/1. Functionally, catalyzes the transfer of a methyl group from 5-methyltetrahydrofolate to homocysteine resulting in methionine formation. This chain is 5-methyltetrahydropteroyltriglutamate--homocysteine methyltransferase, found in Actinobacillus pleuropneumoniae serotype 5b (strain L20).